A 160-amino-acid chain; its full sequence is Ribosomal RNA large subunit methyltransferase H (160 aa).

Residues Leu76, Gly108, and 127–132 contribute to the S-adenosyl-L-methionine site; that span reads LGKMTW.

The protein belongs to the RNA methyltransferase RlmH family. As to quaternary structure, homodimer.

The protein resides in the cytoplasm. The catalysed reaction is pseudouridine(1915) in 23S rRNA + S-adenosyl-L-methionine = N(3)-methylpseudouridine(1915) in 23S rRNA + S-adenosyl-L-homocysteine + H(+). Functionally, specifically methylates the pseudouridine at position 1915 (m3Psi1915) in 23S rRNA. The sequence is that of Ribosomal RNA large subunit methyltransferase H from Sinorhizobium fredii (strain NBRC 101917 / NGR234).